Consider the following 316-residue polypeptide: BRCA2 and CDKN1A-interacting protein (316 aa).

The segment at 1 to 57 (MASKAKKRAVGNGIQRPLGAPGQREEEEEEEDEVEDEEEDEDDSDEEEDEVDEIVDE) is disordered. Residues 25-57 (EEEEEEEDEVEDEEEDEDDSDEEEDEVDEIVDE) are compositionally biased toward acidic residues. Phosphoserine occurs at positions 44 and 114. Residues 61 to 169 (IEFEAYSISD…EQSMVEQLDK (109 aa)) are interaction with BRCA2. The interval 163 to 261 (MVEQLDKLLN…NAEEEFFYEK (99 aa)) is interaction with CDKN1A. The residue at position 283 (Ser-283) is a Phosphoserine.

It belongs to the BCP1 family. As to quaternary structure, interacts with BRCA2, CDKN1A and MTDH/LYRIC. Interacts with DCTN1/p150-glued and ACTR1A/ARP1. Interacts with alpha-, beta- and gamma-tubulins. Interacts with TENT5C; the interaction has no effect on TENT5C poly(A) polymerase function. In terms of tissue distribution, expressed in the testes (at protein level).

It localises to the nucleus. The protein localises to the cytoplasm. It is found in the cytoskeleton. Its subcellular location is the microtubule organizing center. The protein resides in the centrosome. It localises to the centriole. The protein localises to the spindle pole. Its function is as follows. During interphase, required for microtubule organizing and anchoring activities. During mitosis, required for the organization and stabilization of the spindle pole. May promote cell cycle arrest by enhancing the inhibition of CDK2 activity by CDKN1A. May be required for repair of DNA damage by homologous recombination in conjunction with BRCA2. May not be involved in non-homologous end joining (NHEJ). This Mus musculus (Mouse) protein is BRCA2 and CDKN1A-interacting protein (Bccip).